Reading from the N-terminus, the 360-residue chain is MLVWLAEYLVRYETAFNAISYITVRAILTLLTALFISLWIGPKVIKRLQILKFGQEVRNDGPESHFAKKGTPTMGGVMILFSIGVSTLLWANLANPYIWVCLFVLFGYGAIGFVDDFRKITRKNTDGLIARWKYFWMSVVALVAILWLYWLGHDTDATRLVIPFFKDIMPQLGLFYIVLSYFVIVGTGNAVNLTDGLDGLAIMPTALVAGAFALIAWATGNVNFAEYLHIPYIKYSSEVVVFCTAIVGASLGFLWFNTYPAQVFMGDVGSLALGGALGVVAILVRQEFLLVIMGGVFVVEALSVILQVGSYKLRKQRIFRMAPIHHHFELKGWPEPRVIIRFWIISLMLVLMGLVTLKLR.

10 consecutive transmembrane segments (helical) span residues 21–41 (YITV…LWIG), 73–93 (TMGG…WANL), 94–114 (ANPY…IGFV), 132–152 (WKYF…YWLG), 168–188 (IMPQ…VGTG), 199–219 (GLAI…AWAT), 239–259 (VVVF…FNTY), 263–283 (VFMG…VAIL), 288–308 (FLLV…ILQV), and 338–358 (VIIR…VTLK).

It belongs to the glycosyltransferase 4 family. MraY subfamily. Requires Mg(2+) as cofactor.

It is found in the cell inner membrane. It carries out the reaction UDP-N-acetyl-alpha-D-muramoyl-L-alanyl-gamma-D-glutamyl-meso-2,6-diaminopimeloyl-D-alanyl-D-alanine + di-trans,octa-cis-undecaprenyl phosphate = di-trans,octa-cis-undecaprenyl diphospho-N-acetyl-alpha-D-muramoyl-L-alanyl-D-glutamyl-meso-2,6-diaminopimeloyl-D-alanyl-D-alanine + UMP. It functions in the pathway cell wall biogenesis; peptidoglycan biosynthesis. Catalyzes the initial step of the lipid cycle reactions in the biosynthesis of the cell wall peptidoglycan: transfers peptidoglycan precursor phospho-MurNAc-pentapeptide from UDP-MurNAc-pentapeptide onto the lipid carrier undecaprenyl phosphate, yielding undecaprenyl-pyrophosphoryl-MurNAc-pentapeptide, known as lipid I. This Haemophilus influenzae (strain PittEE) protein is Phospho-N-acetylmuramoyl-pentapeptide-transferase.